Consider the following 147-residue polypeptide: Hemoglobin subunit beta (147 aa).

Val2 bears the N-acetylvaline mark. Positions 3-147 (HLTAEEKSAV…VANALAHKYH (145 aa)) constitute a Globin domain. Thr13 is modified (phosphothreonine). Ser45 carries the phosphoserine modification. Position 60 is an N6-acetyllysine (Lys60). A heme b-binding site is contributed by His64. At Lys83 the chain carries N6-acetyllysine. Residue His93 coordinates heme b. At Cys94 the chain carries S-nitrosocysteine. Lys145 carries the post-translational modification N6-acetyllysine.

It belongs to the globin family. In terms of assembly, heterotetramer of two alpha chains and two beta chains. In terms of tissue distribution, red blood cells.

In terms of biological role, involved in oxygen transport from the lung to the various peripheral tissues. The sequence is that of Hemoglobin subunit beta (HBB) from Sapajus apella (Brown-capped capuchin).